We begin with the raw amino-acid sequence, 81 residues long: Photosystem I iron-sulfur center (81 aa).

4Fe-4S ferredoxin-type domains lie at 2 to 31 and 37 to 68; these read SHAV…MVPW and GQIA…IRVY. [4Fe-4S] cluster contacts are provided by Cys-11, Cys-14, Cys-17, Cys-21, Cys-48, Cys-51, Cys-54, and Cys-58.

In terms of assembly, the cyanobacterial PSI reaction center is composed of one copy each of PsaA,B,C,D,E,F,I,J,K,L,M and X, and forms trimeric complexes. [4Fe-4S] cluster is required as a cofactor.

Its subcellular location is the cellular thylakoid membrane. The catalysed reaction is reduced [plastocyanin] + hnu + oxidized [2Fe-2S]-[ferredoxin] = oxidized [plastocyanin] + reduced [2Fe-2S]-[ferredoxin]. In terms of biological role, apoprotein for the two 4Fe-4S centers FA and FB of photosystem I (PSI); essential for photochemical activity. FB is the terminal electron acceptor of PSI, donating electrons to ferredoxin. The C-terminus interacts with PsaA/B/D and helps assemble the protein into the PSI complex. Required for binding of PsaD and PsaE to PSI. PSI is a plastocyanin/cytochrome c6-ferredoxin oxidoreductase, converting photonic excitation into a charge separation, which transfers an electron from the donor P700 chlorophyll pair to the spectroscopically characterized acceptors A0, A1, FX, FA and FB in turn. The polypeptide is Photosystem I iron-sulfur center (Prochlorococcus marinus subsp. pastoris (strain CCMP1986 / NIES-2087 / MED4)).